Here is a 481-residue protein sequence, read N- to C-terminus: Serine/threonine-protein kinase US3 (481 aa).

The disordered stretch occupies residues 12–63 (GQGRRKEEAVPPETKPSRVFPHGPFYTPAEDACLDSPPPETPKPSHTTPPSE). Positions 191–478 (FTIHGALTPG…AAELLCLPLF (288 aa)) constitute a Protein kinase domain. Residues 197–205 (LTPGSEGCV) and K220 contribute to the ATP site. Residue D305 is the Proton acceptor of the active site.

It belongs to the protein kinase superfamily. Ser/Thr protein kinase family. As to quaternary structure, interacts with host LAT; this interaction prevents LAT activation of TRAF6. Post-translationally, phosphorylated by UL13; this phosphorylation regulates subsequent phosphorylation of UL31 and UL34 by US3. Autophosphorylated.

The protein localises to the host cytoplasm. It is found in the host nucleus. The catalysed reaction is L-seryl-[protein] + ATP = O-phospho-L-seryl-[protein] + ADP + H(+). The enzyme catalyses L-threonyl-[protein] + ATP = O-phospho-L-threonyl-[protein] + ADP + H(+). Its function is as follows. Multifunctional serine/threonine kinase that plays a role in several processes including egress of virus particles from the nucleus, modulation of the actin cytoskeleton and inhibition of host immune response. Phosphorylates UL31 and UL34, two critical regulators of capsid budding from nucleus to endoplasmic reticulum, thereby facilitating virion egress. Modulates and redistributes host components of the nuclear envelope, including LMNA, emerin/EMD and the nuclear matrix protein MATR3. In turn, facilitates nuclear pore impairment and capsid release through impaired nuclear envelope. Phosphorylates envelope glycoprotein B (gB), probably to direct it to the cell surface. Promotes virus intracellular spread by restructuring host cell cytoskeleton. Blocks host apoptosis to extend cell survival and allow efficient viral replication. Promotes viral gene expression by phosphorylating host HDAC2 to reduce viral genome silencing. Strongly inhibits TCR-activated signal transduction in T-cells by reducing the ubiquitination of LAT and TRAF6, leading to a suboptimal activation of LAT. Subverts host antiviral innate immunity by inhibiting type I interferon production through hyperphosphorylation of beta-catenin/CTNNB1. In addition, phosphorylates the RNA sensor RIGI and the transcription factor IRF3 to prevent the RLR-mediated antiviral signaling pathway. Hyperphosphorylates host RELA and thereby dampens NF-kappa-B signaling. Acts as an immunoevasin partly responsible for inhibition of MR1 expression and antigen presentation in response to bacterial infection. In Human herpesvirus 1 (strain 17) (HHV-1), this protein is Serine/threonine-protein kinase US3 (US3).